We begin with the raw amino-acid sequence, 688 residues long: Homoaconitase, mitochondrial (688 aa).

Residues C335, C395, and C398 each contribute to the [4Fe-4S] cluster site. Residues 468–494 (SIDLPKSSGNTGATSEEPISEDDTSEA) are disordered.

This sequence belongs to the aconitase/IPM isomerase family. Requires [4Fe-4S] cluster as cofactor.

The protein resides in the mitochondrion. It catalyses the reaction (2R,3S)-homoisocitrate = cis-homoaconitate + H2O. The protein operates within amino-acid biosynthesis; L-lysine biosynthesis via AAA pathway; L-alpha-aminoadipate from 2-oxoglutarate: step 3/5. In terms of biological role, catalyzes the reversible hydration of cis-homoaconitate to (2R,3S)-homoisocitrate, a step in the alpha-aminoadipate pathway for lysine biosynthesis. This Candida parapsilosis (Yeast) protein is Homoaconitase, mitochondrial (LYS4).